Reading from the N-terminus, the 316-residue chain is Malate dehydrogenase 2 (316 aa).

Residues Gly-10–Gly-15 and Asp-34 contribute to the NAD(+) site. 2 residues coordinate substrate: Arg-83 and Arg-89. Residues Asn-96 and Ile-119–Asn-121 each bind NAD(+). Substrate contacts are provided by Asn-121 and Arg-152. His-176 serves as the catalytic Proton acceptor.

It belongs to the LDH/MDH superfamily. MDH type 3 family.

It carries out the reaction (S)-malate + NAD(+) = oxaloacetate + NADH + H(+). Functionally, catalyzes the reversible oxidation of malate to oxaloacetate. In Anaeromyxobacter dehalogenans (strain 2CP-C), this protein is Malate dehydrogenase 2.